Here is a 120-residue protein sequence, read N- to C-terminus: MAVDTTTEAKAIARYIRMSPFKVRRVLDQIRGRSYREALIILEFMPYRACEPILKLLRSAVANAEHNQGLDPTTLVVSQAYADGGPSLRRYRPRAQGRAYQIRKPTCHITIAVAPQVEDN.

The protein belongs to the universal ribosomal protein uL22 family. In terms of assembly, part of the 50S ribosomal subunit.

This protein binds specifically to 23S rRNA; its binding is stimulated by other ribosomal proteins, e.g. L4, L17, and L20. It is important during the early stages of 50S assembly. It makes multiple contacts with different domains of the 23S rRNA in the assembled 50S subunit and ribosome. Functionally, the globular domain of the protein is located near the polypeptide exit tunnel on the outside of the subunit, while an extended beta-hairpin is found that lines the wall of the exit tunnel in the center of the 70S ribosome. The polypeptide is Large ribosomal subunit protein uL22 (Crocosphaera subtropica (strain ATCC 51142 / BH68) (Cyanothece sp. (strain ATCC 51142))).